The chain runs to 155 residues: Protein-export protein SecB (155 aa).

Belongs to the SecB family. As to quaternary structure, homotetramer, a dimer of dimers. One homotetramer interacts with 1 SecA dimer.

The protein localises to the cytoplasm. Functionally, one of the proteins required for the normal export of preproteins out of the cell cytoplasm. It is a molecular chaperone that binds to a subset of precursor proteins, maintaining them in a translocation-competent state. It also specifically binds to its receptor SecA. This chain is Protein-export protein SecB, found in Psychromonas ingrahamii (strain DSM 17664 / CCUG 51855 / 37).